Here is a 198-residue protein sequence, read N- to C-terminus: RNA-free ribonuclease P (198 aa).

Belongs to the HARP family.

The catalysed reaction is Endonucleolytic cleavage of RNA, removing 5'-extranucleotides from tRNA precursor.. Its function is as follows. RNA-free RNase P that catalyzes the removal of the 5'-leader sequence from pre-tRNA to produce the mature 5'-terminus. The chain is RNA-free ribonuclease P from Thermococcus kodakarensis (strain ATCC BAA-918 / JCM 12380 / KOD1) (Pyrococcus kodakaraensis (strain KOD1)).